The sequence spans 648 residues: Rho GTPase-activating protein 25 (648 aa).

One can recognise a PH domain in the interval arginine 46–glycine 151. The region spanning glutamine 160 to phenylalanine 354 is the Rho-GAP domain. Positions lysine 356 to glutamine 559 are disordered. Residues serine 363, serine 396, and serine 403 each carry the phosphoserine modification. Positions arginine 393–threonine 410 are enriched in polar residues. Threonine 407 bears the Phosphothreonine mark. Basic and acidic residues predominate over residues glutamine 417–glycine 431. 2 stretches are compositionally biased toward polar residues: residues serine 453–lysine 462 and aspartate 497–asparagine 515. Serine 537 bears the Phosphoserine mark. A coiled-coil region spans residues glutamate 540–lysine 641.

Its function is as follows. GTPase activator for the Rho-type GTPases by converting them to an inactive GDP-bound state. The sequence is that of Rho GTPase-activating protein 25 (Arhgap25) from Mus musculus (Mouse).